A 248-amino-acid polypeptide reads, in one-letter code: Triosephosphate isomerase (248 aa).

9-11 lines the substrate pocket; it reads NWK. His-94 functions as the Electrophile in the catalytic mechanism. Residue Glu-166 is the Proton acceptor of the active site. Substrate contacts are provided by residues Gly-172, Ser-211, and 232–233; that span reads GG.

It belongs to the triosephosphate isomerase family. In terms of assembly, homodimer.

It localises to the cytoplasm. The enzyme catalyses D-glyceraldehyde 3-phosphate = dihydroxyacetone phosphate. It participates in carbohydrate biosynthesis; gluconeogenesis. The protein operates within carbohydrate degradation; glycolysis; D-glyceraldehyde 3-phosphate from glycerone phosphate: step 1/1. Involved in the gluconeogenesis. Catalyzes stereospecifically the conversion of dihydroxyacetone phosphate (DHAP) to D-glyceraldehyde-3-phosphate (G3P). The polypeptide is Triosephosphate isomerase (Ruthia magnifica subsp. Calyptogena magnifica).